Consider the following 416-residue polypeptide: Nucleoside transporter 1 (416 aa).

Over residues 1-26 (MSISKESSKTMIDIEKKGGEGKDGKG) the composition is skewed to basic and acidic residues. The interval 1 to 28 (MSISKESSKTMIDIEKKGGEGKDGKGGS) is disordered. The Cytoplasmic segment spans residues 1–35 (MSISKESSKTMIDIEKKGGEGKDGKGGSKMTKNEQ). Residues 36–58 (FLLPFTFILIGLSSLNVWNTALG) traverse the membrane as a helical segment. The Extracellular portion of the chain corresponds to 59–64 (LNINFK). Residues 65–83 (YNTFQITGLVCSSIIALFV) form a helical membrane-spanning segment. The Cytoplasmic portion of the chain corresponds to 84–87 (KVPK). The chain crosses the membrane as a helical span at residues 88 to 107 (MLLPFALGGLAMLCAGFQIA). Over 108–119 (HQCFTFEQFDTY) the chain is Extracellular. The helical transmembrane segment at 120-139 (CLIAFIVIGIMAGLAQTIAF) threads the bilayer. The Cytoplasmic portion of the chain corresponds to 140–148 (SVGTTMEEN). A helical membrane pass occupies residues 149 to 171 (MGGYMSAGIGISGVFIFIINLLL). At 172–187 (DQIVPDQKKFNVNEAK) the chain is on the extracellular side. A helical membrane pass occupies residues 188–210 (LLYLFLICELCLVLAIIFSVCNL). Topologically, residues 211–241 (ELSSSKTSKEEEYSDKEQGLSYLELLKDSYK) are cytoplasmic. A helical transmembrane segment spans residues 242–261 (AILAMFLVNWLSLQLFPGVG). The Extracellular segment spans residues 262-273 (HKKWQESHNISD). Residues 274–292 (YNVTLIVGMFQVFDFVSRY) form a helical membrane-spanning segment. Residues 293–311 (PPNLSHMKIFKWFTFSLNK) are Cytoplasmic-facing. The chain crosses the membrane as a helical span at residues 312 to 331 (LLLLNFLRLLFIPWFVINAA). The Extracellular portion of the chain corresponds to 332–343 (CDLPIFTNIVQQ). The chain crosses the membrane as a helical span at residues 344-366 (CVCMAMLAFTNGWFNTVPFLVFV). Topologically, residues 367–380 (QELKKAKKKKDIET) are cytoplasmic. A helical transmembrane segment spans residues 381–403 (ISTFLVVAMFVGLFMGIWTTYIY). Over 404–416 (DFFPIVIKRYVVP) the chain is Extracellular.

This sequence belongs to the SLC29A/ENT transporter (TC 2.A.57) family.

It is found in the cell membrane. The catalysed reaction is inosine(in) = inosine(out). It catalyses the reaction adenosine(in) = adenosine(out). It carries out the reaction hypoxanthine(out) = hypoxanthine(in). The enzyme catalyses guanosine(in) = guanosine(out). The catalysed reaction is guanine(out) = guanine(in). It catalyses the reaction thymidine(in) = thymidine(out). It carries out the reaction uridine(out) = uridine(in). The enzyme catalyses uracil(in) = uracil(out). The catalysed reaction is thymine(out) = thymine(in). It catalyses the reaction adenine(out) = adenine(in). It carries out the reaction cytosine(out) = cytosine(in). The enzyme catalyses xanthine(out) = xanthine(in). In terms of biological role, nucleoside and nucleobase transporter with a broad substrate specificity. This Plasmodium vivax (strain Salvador I) protein is Nucleoside transporter 1.